Reading from the N-terminus, the 566-residue chain is MHPTGPHLGPDVLFRESNMKVTLTFNEQRRAAYRQQGLWGDASLADYWQQTARAMPDKIAVVDNHGASYTYSALDHAASCLANWMLAKGIESGDRIAFQLPGWCEFTVIYLACLKIGAVSVPLLPSWREAELVWVLNKCQAKMFFAPTLFKQTRPVDLILPLQNQLPQLQQIVGVDKLAPATSSLSLSQIIADNTSLTTAITTHGDELAAVLFTSGTEGLPKGVMLTHNNILASERAYCARLNLTWQDVFMMPAPLGHATGFLHGVTAPFLIGARSVLLDIFTPDACLALLEQQRCTCMLGATPFVYDLLNVLEKQPADLSALRFFLCGGTTIPKKVARECQQRGIKLLSVYGSTESSPHAVVNLDDPLSRFMHTDGYAAAGVEIKVVDDARKTLPPGCEGEEASRGPNVFMGYFDEPELTARALDEEGWYYSGDLCRMDEAGYIKITGRKKDIIVRGGENISSREVEDILLQHPKIHDACVVAMSDERLGERSCAYVVLKAPHHSLSLEEVVAFFSRKRVAKYKYPEHIVVIEKLPRTTSGKIQKFLLRKDIMRRLTQDVCEEIE.

231–242 (ILASERAYCARL) is an ATP binding site.

This sequence belongs to the ATP-dependent AMP-binding enzyme family. In terms of assembly, homodimer. Requires Mg(2+) as cofactor.

The protein localises to the cell membrane. It carries out the reaction hexanoate + ATP + CoA = hexanoyl-CoA + AMP + diphosphate. It catalyses the reaction octanoate + ATP + CoA = octanoyl-CoA + AMP + diphosphate. The catalysed reaction is dodecanoate + ATP + CoA = dodecanoyl-CoA + AMP + diphosphate. It participates in lipid metabolism; fatty acid beta-oxidation. Functionally, catalyzes the esterification, concomitant with transport, of exogenous fatty acids into metabolically active CoA thioesters for subsequent degradation or incorporation into phospholipids. Is maximally active on C6:0, C8:0 and C12:0 fatty acids, while has a low activity on C14-C18 chain length fatty acids. Is involved in the anaerobic beta-oxidative degradation of fatty acids, which allows anaerobic growth of E.coli on fatty acids as a sole carbon and energy source in the presence of nitrate or fumarate as a terminal electron acceptor. Can functionally replace FadD under anaerobic conditions. This is Medium-chain fatty-acid--CoA ligase from Escherichia coli (strain K12).